The chain runs to 470 residues: Uronate isomerase (470 aa).

The protein belongs to the metallo-dependent hydrolases superfamily. Uronate isomerase family.

It catalyses the reaction D-glucuronate = D-fructuronate. It carries out the reaction aldehydo-D-galacturonate = keto-D-tagaturonate. The protein operates within carbohydrate metabolism; pentose and glucuronate interconversion. This chain is Uronate isomerase, found in Shigella boydii serotype 4 (strain Sb227).